The chain runs to 440 residues: Glutamyl-tRNA(Gln) amidotransferase subunit D (440 aa).

An Asparaginase/glutaminase domain is found at Pro94 to Asn424. Residues Thr104, Thr180, Asp181, and Lys258 contribute to the active site.

Belongs to the asparaginase 1 family. GatD subfamily. Heterodimer of GatD and GatE.

The enzyme catalyses L-glutamyl-tRNA(Gln) + L-glutamine + ATP + H2O = L-glutaminyl-tRNA(Gln) + L-glutamate + ADP + phosphate + H(+). Functionally, allows the formation of correctly charged Gln-tRNA(Gln) through the transamidation of misacylated Glu-tRNA(Gln) in organisms which lack glutaminyl-tRNA synthetase. The reaction takes place in the presence of glutamine and ATP through an activated gamma-phospho-Glu-tRNA(Gln). The GatDE system is specific for glutamate and does not act on aspartate. This is Glutamyl-tRNA(Gln) amidotransferase subunit D from Thermococcus kodakarensis (strain ATCC BAA-918 / JCM 12380 / KOD1) (Pyrococcus kodakaraensis (strain KOD1)).